The following is a 274-amino-acid chain: Type II restriction enzyme XamI (274 aa).

The catalysed reaction is Endonucleolytic cleavage of DNA to give specific double-stranded fragments with terminal 5'-phosphates.. A P subtype restriction enzyme that recognizes the double-stranded sequence 5'-GTCGAC-3' and cleaves after G-1. The sequence is that of Type II restriction enzyme XamI (xamIR) from Xanthomonas campestris pv. amaranthicola.